The primary structure comprises 221 residues: 2-C-methyl-D-erythritol 4-phosphate cytidylyltransferase (221 aa).

This sequence belongs to the IspD/TarI cytidylyltransferase family. IspD subfamily.

It carries out the reaction 2-C-methyl-D-erythritol 4-phosphate + CTP + H(+) = 4-CDP-2-C-methyl-D-erythritol + diphosphate. The protein operates within isoprenoid biosynthesis; isopentenyl diphosphate biosynthesis via DXP pathway; isopentenyl diphosphate from 1-deoxy-D-xylulose 5-phosphate: step 2/6. Catalyzes the formation of 4-diphosphocytidyl-2-C-methyl-D-erythritol from CTP and 2-C-methyl-D-erythritol 4-phosphate (MEP). In Roseobacter denitrificans (strain ATCC 33942 / OCh 114) (Erythrobacter sp. (strain OCh 114)), this protein is 2-C-methyl-D-erythritol 4-phosphate cytidylyltransferase.